The sequence spans 176 residues: Translation initiation factor IF-3 (176 aa).

This sequence belongs to the IF-3 family. As to quaternary structure, monomer.

The protein localises to the cytoplasm. Its function is as follows. IF-3 binds to the 30S ribosomal subunit and shifts the equilibrium between 70S ribosomes and their 50S and 30S subunits in favor of the free subunits, thus enhancing the availability of 30S subunits on which protein synthesis initiation begins. This chain is Translation initiation factor IF-3, found in Streptococcus mutans serotype c (strain ATCC 700610 / UA159).